Here is a 217-residue protein sequence, read N- to C-terminus: MKAYQRQFIEFALEKQVLKFGEFTLKSGRKSPYFFNAGLFNSGRDLARLGRFYAAALMDGGIEFDVLFGPAYKGIPIASATAVQLVEQHDVDVPWCFNRKEAKDHGEGGNLVGSPLKGRIMLVDDVITAGTAIRESMDLIQANGASLAGVLIALDRQEKGKGELSAIQEVERDYGAHIIAIIQMGDLIAYLEEKQAEQPELAVQLAAMQAYRAQYGI.

K26 serves as a coordination point for 5-phospho-alpha-D-ribose 1-diphosphate. 34–35 (FF) contacts orotate. 5-phospho-alpha-D-ribose 1-diphosphate-binding positions include 72–73 (YK), R99, K100, K103, H105, and 124–132 (DDVITAGTA). Orotate-binding residues include T128 and R156.

Belongs to the purine/pyrimidine phosphoribosyltransferase family. PyrE subfamily. Homodimer. The cofactor is Mg(2+).

The catalysed reaction is orotidine 5'-phosphate + diphosphate = orotate + 5-phospho-alpha-D-ribose 1-diphosphate. The protein operates within pyrimidine metabolism; UMP biosynthesis via de novo pathway; UMP from orotate: step 1/2. In terms of biological role, catalyzes the transfer of a ribosyl phosphate group from 5-phosphoribose 1-diphosphate to orotate, leading to the formation of orotidine monophosphate (OMP). This is Orotate phosphoribosyltransferase from Aeromonas salmonicida (strain A449).